We begin with the raw amino-acid sequence, 273 residues long: CUE domain-containing protein 2-A (273 aa).

Residues 92-121 are disordered; the sequence is GKENVSPKPTAEVSFMTPTSSSTESSKKIE. Residues 135 to 178 enclose the CUE domain; that stretch reads DAKNGIDLLLEIFPSCTVSQAQTALSMAKGDLEDAVQIIVDGKV.

The protein belongs to the CUEDC2 family. Phosphorylated.

The protein resides in the cytoplasm. It localises to the nucleus. Its function is as follows. May play a role in targeting proteins for ubiquitination and subsequent proteasomal degradation. The protein is CUE domain-containing protein 2-A (cuedc2-a) of Xenopus laevis (African clawed frog).